A 378-amino-acid chain; its full sequence is Chaperone protein DnaJ 2 (378 aa).

In terms of domain architecture, J spans 4-68 (DYYGLLGVSR…EKRRIVDLGG (65 aa)). Residues 128–210 (GVTKQVTVDT…CVGDGRVRAR (83 aa)) form a CR-type zinc finger. Positions 141, 144, 158, 161, 184, 187, 198, and 201 each coordinate Zn(2+). CXXCXGXG motif repeat units follow at residues 141 to 148 (CDRCQGKG), 158 to 165 (CDTCGGRG), 184 to 191 (CPTCRGVG), and 198 to 205 (CCQCVGDG).

The protein belongs to the DnaJ family. In terms of assembly, homodimer. It depends on Zn(2+) as a cofactor.

The protein resides in the cytoplasm. Functionally, participates actively in the response to hyperosmotic and heat shock by preventing the aggregation of stress-denatured proteins and by disaggregating proteins, also in an autonomous, DnaK-independent fashion. Unfolded proteins bind initially to DnaJ; upon interaction with the DnaJ-bound protein, DnaK hydrolyzes its bound ATP, resulting in the formation of a stable complex. GrpE releases ADP from DnaK; ATP binding to DnaK triggers the release of the substrate protein, thus completing the reaction cycle. Several rounds of ATP-dependent interactions between DnaJ, DnaK and GrpE are required for fully efficient folding. Also involved, together with DnaK and GrpE, in the DNA replication of plasmids through activation of initiation proteins. The polypeptide is Chaperone protein DnaJ 2 (Mycobacterium leprae (strain TN)).